The sequence spans 587 residues: Polyphenol oxidase E, chloroplastic (587 aa).

The N-terminal 87 residues, 1-87 (MSSSSSITTT…AANLAPLATA (87 aa)), are a transit peptide targeting the chloroplast. Intrachain disulfides connect C98-C114 and C113-C180. 6 residues coordinate Cu cation: H179, H197, H206, H328, H332, and H363. A cross-link (2'-(S-cysteinyl)-histidine (Cys-His)) is located at residues 183–197 (CNGAYKVGGKELQVH).

Belongs to the tyrosinase family. Requires Cu(2+) as cofactor.

It localises to the plastid. Its subcellular location is the chloroplast thylakoid lumen. It catalyses the reaction 2 catechol + O2 = 2 1,2-benzoquinone + 2 H2O. Its function is as follows. Catalyzes the oxidation of mono- and o-diphenols to o-diquinones. The protein is Polyphenol oxidase E, chloroplastic of Solanum lycopersicum (Tomato).